The chain runs to 162 residues: uncharacterized protein (162 aa).

The tract at residues 1-49 (MNSRTASARGWFSSRPPTSESDLEPATDGPASETTTLSPEATTFNDTRI) is disordered. Residues 32–46 (SETTTLSPEATTFND) are compositionally biased toward polar residues. A helical membrane pass occupies residues 62-82 (MLLSFGIITVIGLAVALVLYI).

It localises to the membrane. This is an uncharacterized protein from Homo sapiens (Human).